The following is a 295-amino-acid chain: Undecaprenyl-diphosphatase (295 aa).

6 consecutive transmembrane segments (helical) span residues 39-59, 97-117, 121-141, 198-218, 232-252, and 263-283; these read PGAA…LLYF, WYII…QHAI, LRNL…LWIV, AFLM…VKAI, ATIA…IGFL, and FAIY…CGVL.

The protein belongs to the UppP family.

It localises to the cell membrane. The enzyme catalyses di-trans,octa-cis-undecaprenyl diphosphate + H2O = di-trans,octa-cis-undecaprenyl phosphate + phosphate + H(+). In terms of biological role, catalyzes the dephosphorylation of undecaprenyl diphosphate (UPP). Confers resistance to bacitracin. This is Undecaprenyl-diphosphatase from Bifidobacterium animalis subsp. lactis (strain AD011).